The following is a 287-amino-acid chain: Phosphatidylserine decarboxylase proenzyme (287 aa).

Catalysis depends on charge relay system; for autoendoproteolytic cleavage activity residues Asp89, His146, and Ser252. Ser252 serves as the catalytic Schiff-base intermediate with substrate; via pyruvic acid; for decarboxylase activity. At Ser252 the chain carries Pyruvic acid (Ser); by autocatalysis.

This sequence belongs to the phosphatidylserine decarboxylase family. PSD-B subfamily. Prokaryotic type I sub-subfamily. As to quaternary structure, heterodimer of a large membrane-associated beta subunit and a small pyruvoyl-containing alpha subunit. It depends on pyruvate as a cofactor. Is synthesized initially as an inactive proenzyme. Formation of the active enzyme involves a self-maturation process in which the active site pyruvoyl group is generated from an internal serine residue via an autocatalytic post-translational modification. Two non-identical subunits are generated from the proenzyme in this reaction, and the pyruvate is formed at the N-terminus of the alpha chain, which is derived from the carboxyl end of the proenzyme. The autoendoproteolytic cleavage occurs by a canonical serine protease mechanism, in which the side chain hydroxyl group of the serine supplies its oxygen atom to form the C-terminus of the beta chain, while the remainder of the serine residue undergoes an oxidative deamination to produce ammonia and the pyruvoyl prosthetic group on the alpha chain. During this reaction, the Ser that is part of the protease active site of the proenzyme becomes the pyruvoyl prosthetic group, which constitutes an essential element of the active site of the mature decarboxylase.

Its subcellular location is the cell membrane. It catalyses the reaction a 1,2-diacyl-sn-glycero-3-phospho-L-serine + H(+) = a 1,2-diacyl-sn-glycero-3-phosphoethanolamine + CO2. It participates in phospholipid metabolism; phosphatidylethanolamine biosynthesis; phosphatidylethanolamine from CDP-diacylglycerol: step 2/2. Catalyzes the formation of phosphatidylethanolamine (PtdEtn) from phosphatidylserine (PtdSer). The protein is Phosphatidylserine decarboxylase proenzyme of Shewanella halifaxensis (strain HAW-EB4).